A 96-amino-acid polypeptide reads, in one-letter code: Co-chaperonin GroES (96 aa).

This sequence belongs to the GroES chaperonin family. As to quaternary structure, heptamer of 7 subunits arranged in a ring. Interacts with the chaperonin GroEL.

It localises to the cytoplasm. In terms of biological role, together with the chaperonin GroEL, plays an essential role in assisting protein folding. The GroEL-GroES system forms a nano-cage that allows encapsulation of the non-native substrate proteins and provides a physical environment optimized to promote and accelerate protein folding. GroES binds to the apical surface of the GroEL ring, thereby capping the opening of the GroEL channel. This is Co-chaperonin GroES from Actinobacillus pleuropneumoniae serotype 3 (strain JL03).